The chain runs to 231 residues: Succinate dehydrogenase subunit 5, mitochondrial (231 aa).

A mitochondrion-targeting transit peptide spans 1–63 (MAAALRSSCA…AFSWNLRRLF (63 aa)).

As to quaternary structure, component of complex II composed of eight subunits in plants: four classical SDH subunits SDH1, SDH2, SDH3 and SDH4 (a flavoprotein (FP), an iron-sulfur protein (IP), and a cytochrome b composed of a large and a small subunit.), as well as four subunits unknown in mitochondria from bacteria and heterotrophic eukaryotes.

It is found in the mitochondrion inner membrane. It participates in carbohydrate metabolism; tricarboxylic acid cycle. This Oryza sativa subsp. japonica (Rice) protein is Succinate dehydrogenase subunit 5, mitochondrial.